The following is an 89-amino-acid chain: Small ribosomal subunit protein uS15 (89 aa).

The protein belongs to the universal ribosomal protein uS15 family. As to quaternary structure, part of the 30S ribosomal subunit. Forms a bridge to the 50S subunit in the 70S ribosome, contacting the 23S rRNA.

In terms of biological role, one of the primary rRNA binding proteins, it binds directly to 16S rRNA where it helps nucleate assembly of the platform of the 30S subunit by binding and bridging several RNA helices of the 16S rRNA. Functionally, forms an intersubunit bridge (bridge B4) with the 23S rRNA of the 50S subunit in the ribosome. This chain is Small ribosomal subunit protein uS15, found in Acidiphilium cryptum (strain JF-5).